The primary structure comprises 203 residues: Glycerol-3-phosphate acyltransferase (203 aa).

Transmembrane regions (helical) follow at residues 6–26, 82–102, 118–138, and 141–161; these read LTLL…AVLV, AISL…PIFF, APIG…LVLI, and YSSL…WWLD.

It belongs to the PlsY family. As to quaternary structure, probably interacts with PlsX.

It is found in the cell inner membrane. The enzyme catalyses an acyl phosphate + sn-glycerol 3-phosphate = a 1-acyl-sn-glycero-3-phosphate + phosphate. Its pathway is lipid metabolism; phospholipid metabolism. Catalyzes the transfer of an acyl group from acyl-phosphate (acyl-PO(4)) to glycerol-3-phosphate (G3P) to form lysophosphatidic acid (LPA). This enzyme utilizes acyl-phosphate as fatty acyl donor, but not acyl-CoA or acyl-ACP. The protein is Glycerol-3-phosphate acyltransferase of Shewanella sp. (strain MR-4).